The chain runs to 652 residues: MFKRPLTLSLLASLIALTTSTAQAATVDLRVLETTDLHSNMMDFDYYKDKPTEKFGLVRTASLIEAARQQATNSVLVDNGDLIQGSPLGDYMAAKGLKAGEIHPVYKAMNTLDYAVGNIGNHEFNYGLDYLKKSLAGAKFPYVNANVIDVKTGKPLFQPYLIVDTPVKDRDGKNHNLRIGYIGFGPPQVMIWDKANLTGKVTVDDITETAKKWVPEMRKQGANLVVAIPHSGLSSDPYKTMAENSVYYLSQVPGIDAIMFGHAHAVFPSKDFATIKGADIAQGTLNGIPAVMPGQWGDHLGVVDFVLNNDQGQWQVTQAKAEARPIFDKATQKSLAAENANLMKVLAADHQGTRDFVSQPIGTASDNMYSYLSLIQDDPTVQIVNNAQRAYTEHFIQGDPDLADLPVLSAAAPFKAGGRKNDPASFVEVEKGELTFRNAADLYLYPNTLVVVKASGADVKQWLECSAAQFNQIDVNSSKPQSLINWDSFRTYNFDVIDGVNYEIDVSQPARYDGECALINDKAERIKNLTFNGKPIDPQATFLIGTNNYRAYSGKFAGTGDSHIAFASPDENRAVLSAYISAETKKHGQVTPQADNNWRLATLNSQQPLDIRFETSPSTKAAEFIKQKAQYPMKAMGTDEIGFAVFKIDLQK.

Residues 1–24 form the signal peptide; it reads MFKRPLTLSLLASLIALTTSTAQA. Aspartate 36, histidine 38, aspartate 81, asparagine 121, histidine 230, histidine 262, and histidine 264 together coordinate a divalent metal cation. Residues tyrosine 445 and 549–555 contribute to the substrate site; that span reads YRAYSGK.

It belongs to the 5'-nucleotidase family. The cofactor is a divalent metal cation.

The protein localises to the periplasm. The enzyme catalyses a nucleoside 2',3'-cyclic phosphate + H2O = a nucleoside 3'-phosphate + H(+). It carries out the reaction a ribonucleoside 3'-phosphate + H2O = a ribonucleoside + phosphate. In terms of biological role, this bifunctional enzyme catalyzes two consecutive reactions during ribonucleic acid degradation. Converts a 2',3'-cyclic nucleotide to a 3'-nucleotide and then the 3'-nucleotide to the corresponding nucleoside and phosphate. The chain is 2',3'-cyclic-nucleotide 2'-phosphodiesterase/3'-nucleotidase (cpdB) from Yersinia enterocolitica.